The chain runs to 384 residues: tRNA-specific 2-thiouridylase MnmA (384 aa).

Residues 18-25 and Leu44 each bind ATP; that span reads AMSGGVDS. The Nucleophile role is filled by Cys112. Residues Cys112 and Cys209 are joined by a disulfide bond. Gly136 contributes to the ATP binding site. Positions 159-161 are interaction with tRNA; that stretch reads RDQ. The active-site Cysteine persulfide intermediate is the Cys209.

The protein belongs to the MnmA/TRMU family.

The protein resides in the cytoplasm. It catalyses the reaction S-sulfanyl-L-cysteinyl-[protein] + uridine(34) in tRNA + AH2 + ATP = 2-thiouridine(34) in tRNA + L-cysteinyl-[protein] + A + AMP + diphosphate + H(+). Functionally, catalyzes the 2-thiolation of uridine at the wobble position (U34) of tRNA, leading to the formation of s(2)U34. This chain is tRNA-specific 2-thiouridylase MnmA, found in Methylobacterium radiotolerans (strain ATCC 27329 / DSM 1819 / JCM 2831 / NBRC 15690 / NCIMB 10815 / 0-1).